We begin with the raw amino-acid sequence, 600 residues long: UvrABC system protein C (600 aa).

The GIY-YIG domain maps to 15-100 (NSAGVYQYFN…IKQLHPKYNI (86 aa)). Residues 203–238 (SVLLKNLEKQMLVLAQNENYEEAAKVRDQIAMIKDL) form the UVR domain.

Belongs to the UvrC family. As to quaternary structure, interacts with UvrB in an incision complex.

Its subcellular location is the cytoplasm. In terms of biological role, the UvrABC repair system catalyzes the recognition and processing of DNA lesions. UvrC both incises the 5' and 3' sides of the lesion. The N-terminal half is responsible for the 3' incision and the C-terminal half is responsible for the 5' incision. The protein is UvrABC system protein C of Campylobacter jejuni (strain RM1221).